A 326-amino-acid polypeptide reads, in one-letter code: Cinnamoyl-CoA reductase CAD2 (326 aa).

NADP(+)-binding positions include 14–20, arginine 39, lysine 46, 66–67, and 86–88; these read GASGYIA, NL, and TAS. 4 residues coordinate (E)-coniferaldehyde: serine 130, tyrosine 136, arginine 141, and tyrosine 165. NADP(+) is bound by residues tyrosine 165, lysine 169, 192-195, and serine 207; that span reads PAMV. The active-site Proton donor is lysine 169. Residues methionine 194, serine 207, phenylalanine 226, valine 257, and tyrosine 290 each contribute to the (E)-coniferaldehyde site.

The protein belongs to the NAD(P)-dependent epimerase/dehydratase family. Dihydroflavonol-4-reductase subfamily.

It localises to the cytoplasm. It catalyses the reaction (E)-cinnamaldehyde + NADP(+) + CoA = (E)-cinnamoyl-CoA + NADPH + H(+). It carries out the reaction (E)-coniferaldehyde + NADP(+) + CoA = (E)-feruloyl-CoA + NADPH + H(+). The enzyme catalyses (E)-4-coumaraldehyde + NADP(+) + CoA = (E)-4-coumaroyl-CoA + NADPH + H(+). It participates in aromatic compound metabolism; phenylpropanoid biosynthesis. In terms of biological role, involved in lignin biosynthesis. Regulates the monolignol composition by catalyzing the conversion of cinnamoyl-CoAs into their corresponding cinnamaldehydes. Can use coumaraldehyde and coniferaldehyde as substrates, but barely sinapaldehyde. The polypeptide is Cinnamoyl-CoA reductase CAD2 (Medicago truncatula (Barrel medic)).